The primary structure comprises 158 residues: Glutathione peroxidase homolog BsaA (158 aa).

The active site involves cysteine 36.

Belongs to the glutathione peroxidase family.

The protein is Glutathione peroxidase homolog BsaA (bsaA) of Staphylococcus aureus (strain COL).